The chain runs to 361 residues: FK506-binding protein 39 kDa (361 aa).

Residues 122-256 are disordered; sequence LVDEEDEEEE…PSSPKTRTLK (135 aa). Residues 123-174 show a composition bias toward acidic residues; that stretch reads VDEEDEEEEESDEDYDLSPTEEDLVETVSGDEESEEESESEDNSASEEDELD. Phosphoserine is present on Ser192. Over residues 208 to 227 the composition is skewed to basic and acidic residues; that stretch reads QKVEGTPVKEKKVAFAEKLE. A Phosphothreonine modification is found at Thr213. A compositionally biased stretch (polar residues) spans 241–252; the sequence is QASSNAPSSPKT. Phosphoserine is present on Ser249. Positions 275–361 constitute a PPIase FKBP-type domain; sequence GKKVEMRYIG…VFEVKLVRVH (87 aa).

The protein belongs to the FKBP-type PPIase family. FKBP3/4 subfamily.

The protein resides in the nucleus. It is found in the nucleolus. It catalyses the reaction [protein]-peptidylproline (omega=180) = [protein]-peptidylproline (omega=0). PPIase that acts as a histone chaperone. Histone proline isomerase that increases the rate of cis-trans isomerization at prolines on the histone H3 N-terminal tail. Proline isomerization influences H3 methylation thereby regulating gene expression. This Schizosaccharomyces pombe (strain 972 / ATCC 24843) (Fission yeast) protein is FK506-binding protein 39 kDa.